The following is a 69-amino-acid chain: Large ribosomal subunit protein bL31 (69 aa).

Positions 17, 19, 37, and 40 each coordinate Zn(2+).

This sequence belongs to the bacterial ribosomal protein bL31 family. Type A subfamily. Part of the 50S ribosomal subunit. Requires Zn(2+) as cofactor.

Binds the 23S rRNA. The sequence is that of Large ribosomal subunit protein bL31 from Caldicellulosiruptor saccharolyticus (strain ATCC 43494 / DSM 8903 / Tp8T 6331).